The sequence spans 60 residues: Putative mercuric resistance protein (60 aa).

The polypeptide is Putative mercuric resistance protein (Shigella flexneri).